The following is a 567-amino-acid chain: Adenine deaminase 2 (567 aa).

This sequence belongs to the metallo-dependent hydrolases superfamily. Adenine deaminase family. It depends on Mn(2+) as a cofactor.

The catalysed reaction is adenine + H2O + H(+) = hypoxanthine + NH4(+). The protein is Adenine deaminase 2 of Oenococcus oeni (strain ATCC BAA-331 / PSU-1).